Consider the following 423-residue polypeptide: GPI mannosyltransferase 2 (423 aa).

9 helical membrane-spanning segments follow: residues 7-27 (LTLI…ILSG), 102-122 (VILG…LVLY), 128-148 (IFNP…PTAT), 151-171 (APYT…LLSI), 191-211 (TGIF…AHIF), 228-248 (FLSA…TETV), 298-318 (LAMP…SHLV), 333-353 (PPPI…LLLF), and 400-420 (YWIG…AGHY).

The protein belongs to the PIGV family.

It is found in the endoplasmic reticulum membrane. The protein operates within glycolipid biosynthesis; glycosylphosphatidylinositol-anchor biosynthesis. Mannosyltransferase involved in glycosylphosphatidylinositol-anchor biosynthesis. Transfers the second mannose to the glycosylphosphatidylinositol during GPI precursor assembly. This Cryptococcus neoformans var. neoformans serotype D (strain B-3501A) (Filobasidiella neoformans) protein is GPI mannosyltransferase 2 (GPI18).